We begin with the raw amino-acid sequence, 230 residues long: L-aspartate/glutamate-specific racemase (230 aa).

Substrate-binding positions include Met10, Gln52, and 83–85 (TNT). Thr83 acts as the Proton donor in catalysis. Cys197 acts as the Proton acceptor in catalysis. Substrate is bound at residue 198–199 (TE).

It belongs to the aspartate/glutamate racemases family. As to quaternary structure, homodimer.

It carries out the reaction L-glutamate = D-glutamate. The enzyme catalyses L-aspartate = D-aspartate. Exhibits racemase activity for both L-glutamate and L-aspartate. This Escherichia coli O157:H7 protein is L-aspartate/glutamate-specific racemase.